Consider the following 281-residue polypeptide: uncharacterized protein (281 aa).

A helical membrane pass occupies residues 5–27 (AYVTVIYGNNIYLTGALVLGYTL).

It is found in the membrane. This is an uncharacterized protein from Acanthamoeba polyphaga mimivirus (APMV).